The following is a 280-amino-acid chain: Intimin (280 aa).

The region spanning 1-92 (ITEIKADKTT…MLKLLEVEFF (92 aa)) is the Big-1 domain. The 47-residue stretch at 127 to 173 (ANGGNGKYTWYSANPAIASVDPSSGQVTLKDKGETTITVVSGDKQTA) folds into the BIG2 domain. Cys201 and Cys278 are joined by a disulfide.

This sequence belongs to the intimin/invasin family.

It localises to the cell outer membrane. In terms of biological role, an inverse autotransporter. The chain is Intimin (eaeA) from Hafnia alvei.